Reading from the N-terminus, the 576-residue chain is Aspartate--tRNA ligase (576 aa).

Residue E170 coordinates L-aspartate. Residues 194 to 197 (QLFK) are aspartate. R216 serves as a coordination point for L-aspartate. ATP contacts are provided by residues 216–218 (RDE) and Q225. L-aspartate is bound at residue H438. ATP is bound at residue E471. R478 contributes to the L-aspartate binding site. Residue 523–526 (GLDR) participates in ATP binding.

The protein belongs to the class-II aminoacyl-tRNA synthetase family. Type 1 subfamily. In terms of assembly, homodimer.

It localises to the cytoplasm. The enzyme catalyses tRNA(Asp) + L-aspartate + ATP = L-aspartyl-tRNA(Asp) + AMP + diphosphate. Catalyzes the attachment of L-aspartate to tRNA(Asp) in a two-step reaction: L-aspartate is first activated by ATP to form Asp-AMP and then transferred to the acceptor end of tRNA(Asp). This Fervidobacterium nodosum (strain ATCC 35602 / DSM 5306 / Rt17-B1) protein is Aspartate--tRNA ligase.